A 512-amino-acid chain; its full sequence is Solute carrier family 40 member 2 (512 aa).

The tract at residues 1–28 (MEEETETRVFLSNEQHQEEEEEEEEEPS) is disordered. Acidic residues predominate over residues 17-27 (QEEEEEEEEEP). Transmembrane regions (helical) follow at residues 55 to 75 (VALY…MYGV), 105 to 125 (LVTQ…LLVV), 133 to 153 (FPVF…GVLS), 187 to 207 (GIDL…ISFV), 214 to 234 (ITFA…FISV), 310 to 330 (IVLP…FGTL), 343 to 363 (YIIG…TVLY), 376 to 396 (GVWS…SIWV), 405 to 425 (MLMA…LAVI), 442 to 462 (GVQN…GIIV), and 468 to 488 (FWML…LYTI).

This sequence belongs to the ferroportin (FP) (TC 2.A.100) family. SLC40A subfamily.

It is found in the vacuole membrane. Vacuolar transporter that is involved in the transport of excess nickel into the vacuole under iron deficiency, increasing cellular tolerance to nickel under iron deficiency stress response. The chain is Solute carrier family 40 member 2 (IREG2) from Arabidopsis thaliana (Mouse-ear cress).